A 302-amino-acid polypeptide reads, in one-letter code: Alpha-ketoglutarate-dependent dioxygenase alkB homolog 4 (302 aa).

Alanine 2 carries the N-acetylalanine modification. Residue threonine 8 is modified to Phosphothreonine. The Fe2OG dioxygenase domain occupies 150–274 (PVEQCNLDYC…RVCVTFRELS (125 aa)). Histidine 169, aspartate 171, and histidine 254 together coordinate Fe cation. Residue arginine 265 participates in 2-oxoglutarate binding.

It belongs to the alkB family. As to quaternary structure, interacts with ZFHX3, MLLT3, MLLT1, HSF4, EP300, TES, EIF3C, MTMR6 and PSMA6. Fe(2+) is required as a cofactor. As to expression, widely expressed, with highest expression in pancreas, ovary and spleen.

The protein resides in the cytoplasm. It localises to the nucleus. The protein localises to the nucleolus. It is found in the midbody. It carries out the reaction an N(6)-methyl-2'-deoxyadenosine in DNA + 2-oxoglutarate + O2 = a 2'-deoxyadenosine in DNA + formaldehyde + succinate + CO2. The catalysed reaction is N(6)-methyl-L-lysyl-[protein] + 2-oxoglutarate + O2 = L-lysyl-[protein] + formaldehyde + succinate + CO2. Functionally, dioxygenase that mediates demethylation of actin monomethylated at 'Lys-84' (K84me1), thereby acting as a regulator of actomyosin-processes. Demethylation of actin K84me1 is required for maintaining actomyosin dynamics supporting normal cleavage furrow ingression during cytokinesis and cell migration. In addition to proteins, also demethylates DNA: specifically demethylates DNA methylated on the 6th position of adenine (N(6)-methyladenosine) DNA, thereby regulating Polycomb silencing. The sequence is that of Alpha-ketoglutarate-dependent dioxygenase alkB homolog 4 from Homo sapiens (Human).